The primary structure comprises 417 residues: NADH-quinone oxidoreductase subunit D (417 aa).

The protein belongs to the complex I 49 kDa subunit family. As to quaternary structure, NDH-1 is composed of 14 different subunits. Subunits NuoB, C, D, E, F, and G constitute the peripheral sector of the complex.

It is found in the cell inner membrane. It catalyses the reaction a quinone + NADH + 5 H(+)(in) = a quinol + NAD(+) + 4 H(+)(out). Its function is as follows. NDH-1 shuttles electrons from NADH, via FMN and iron-sulfur (Fe-S) centers, to quinones in the respiratory chain. The immediate electron acceptor for the enzyme in this species is believed to be ubiquinone. Couples the redox reaction to proton translocation (for every two electrons transferred, four hydrogen ions are translocated across the cytoplasmic membrane), and thus conserves the redox energy in a proton gradient. This Cupriavidus necator (strain ATCC 17699 / DSM 428 / KCTC 22496 / NCIMB 10442 / H16 / Stanier 337) (Ralstonia eutropha) protein is NADH-quinone oxidoreductase subunit D.